We begin with the raw amino-acid sequence, 387 residues long: Protein-glutamate methylesterase/protein-glutamine glutaminase 1 (387 aa).

The Response regulatory domain maps to 18-136; that stretch reads RVMVVDDSAV…EISGGTDFRH (119 aa). Aspartate 69 is modified (4-aspartylphosphate). One can recognise a CheB-type methylesterase domain in the interval 190-387; sequence PAAEERPDII…AYVLRSANKR (198 aa). Catalysis depends on residues serine 204, histidine 233, and aspartate 329.

This sequence belongs to the CheB family. Post-translationally, phosphorylated by CheA. Phosphorylation of the N-terminal regulatory domain activates the methylesterase activity.

The protein localises to the cytoplasm. The enzyme catalyses [protein]-L-glutamate 5-O-methyl ester + H2O = L-glutamyl-[protein] + methanol + H(+). It carries out the reaction L-glutaminyl-[protein] + H2O = L-glutamyl-[protein] + NH4(+). Functionally, involved in chemotaxis. Part of a chemotaxis signal transduction system that modulates chemotaxis in response to various stimuli. Catalyzes the demethylation of specific methylglutamate residues introduced into the chemoreceptors (methyl-accepting chemotaxis proteins or MCP) by CheR. Also mediates the irreversible deamidation of specific glutamine residues to glutamic acid. The polypeptide is Protein-glutamate methylesterase/protein-glutamine glutaminase 1 (Rhodospirillum rubrum (strain ATCC 11170 / ATH 1.1.1 / DSM 467 / LMG 4362 / NCIMB 8255 / S1)).